Consider the following 351-residue polypeptide: Biotin synthase (351 aa).

Residues 44-262 enclose the Radical SAM core domain; it reads NRVQVSTLLS…LAVARILMPQ (219 aa). [4Fe-4S] cluster is bound by residues Cys59, Cys63, and Cys66. [2Fe-2S] cluster-binding residues include Cys103, Cys134, Cys194, and Arg266.

It belongs to the radical SAM superfamily. Biotin synthase family. In terms of assembly, homodimer. Requires [4Fe-4S] cluster as cofactor. It depends on [2Fe-2S] cluster as a cofactor.

It carries out the reaction (4R,5S)-dethiobiotin + (sulfur carrier)-SH + 2 reduced [2Fe-2S]-[ferredoxin] + 2 S-adenosyl-L-methionine = (sulfur carrier)-H + biotin + 2 5'-deoxyadenosine + 2 L-methionine + 2 oxidized [2Fe-2S]-[ferredoxin]. The protein operates within cofactor biosynthesis; biotin biosynthesis; biotin from 7,8-diaminononanoate: step 2/2. Functionally, catalyzes the conversion of dethiobiotin (DTB) to biotin by the insertion of a sulfur atom into dethiobiotin via a radical-based mechanism. The protein is Biotin synthase of Pseudomonas fluorescens (strain Pf0-1).